Reading from the N-terminus, the 555-residue chain is Cytochrome P450 78A11 (555 aa).

Residues 12–32 traverse the membrane as a helical segment; that stretch reads VDATWWAYALPALLGADTLCA. Cys495 is a heme binding site.

This sequence belongs to the cytochrome P450 family. It depends on heme as a cofactor. As to expression, expressed in seedlings, shoot apices and young panicles, but not in mature leaves, calli and roots.

It is found in the membrane. In terms of biological role, involved in the regular timing (plastochron) of lateral organs formation. May regulate the rate of leaf initiation and the duration of vegetative phase. Seems to be redundant to the function of PLASTOCHRON2, but to act in an independent pathway. This Oryza sativa subsp. japonica (Rice) protein is Cytochrome P450 78A11 (CYP78A11).